The chain runs to 218 residues: Phosphatidylserine decarboxylase proenzyme (218 aa).

The active-site Schiff-base intermediate with substrate; via pyruvic acid is the Ser182. At Ser182 the chain carries Pyruvic acid (Ser); by autocatalysis.

It belongs to the phosphatidylserine decarboxylase family. PSD-A subfamily. As to quaternary structure, heterodimer of a large membrane-associated beta subunit and a small pyruvoyl-containing alpha subunit. Pyruvate is required as a cofactor. Post-translationally, is synthesized initially as an inactive proenzyme. Formation of the active enzyme involves a self-maturation process in which the active site pyruvoyl group is generated from an internal serine residue via an autocatalytic post-translational modification. Two non-identical subunits are generated from the proenzyme in this reaction, and the pyruvate is formed at the N-terminus of the alpha chain, which is derived from the carboxyl end of the proenzyme. The post-translation cleavage follows an unusual pathway, termed non-hydrolytic serinolysis, in which the side chain hydroxyl group of the serine supplies its oxygen atom to form the C-terminus of the beta chain, while the remainder of the serine residue undergoes an oxidative deamination to produce ammonia and the pyruvoyl prosthetic group on the alpha chain.

The protein localises to the cell membrane. It carries out the reaction a 1,2-diacyl-sn-glycero-3-phospho-L-serine + H(+) = a 1,2-diacyl-sn-glycero-3-phosphoethanolamine + CO2. The protein operates within phospholipid metabolism; phosphatidylethanolamine biosynthesis; phosphatidylethanolamine from CDP-diacylglycerol: step 2/2. Functionally, catalyzes the formation of phosphatidylethanolamine (PtdEtn) from phosphatidylserine (PtdSer). The sequence is that of Phosphatidylserine decarboxylase proenzyme from Oleidesulfovibrio alaskensis (strain ATCC BAA-1058 / DSM 17464 / G20) (Desulfovibrio alaskensis).